We begin with the raw amino-acid sequence, 96 residues long: UPF0235 protein VC0395_A0010/VC395_0502 (96 aa).

This sequence belongs to the UPF0235 family.

In Vibrio cholerae serotype O1 (strain ATCC 39541 / Classical Ogawa 395 / O395), this protein is UPF0235 protein VC0395_A0010/VC395_0502.